Here is a 111-residue protein sequence, read N- to C-terminus: Beta-2-microglobulin (111 aa).

Residues 1–17 (MRALILLSLGLLRVAVP) form the signal peptide. The Ig-like C1-type domain maps to 20–111 (PQVVVYTYKP…KTSIYKLESF (92 aa)).

The protein belongs to the beta-2-microglobulin family. In terms of assembly, heterodimer of an alpha chain and a beta chain. Beta-2-microglobulin is the beta-chain of major histocompatibility complex class I molecules.

Its subcellular location is the secreted. In terms of biological role, component of the class I major histocompatibility complex (MHC). Involved in the presentation of peptide antigens to the immune system. The polypeptide is Beta-2-microglobulin (b2m) (Rostroraja eglanteria (Clearnose skate)).